The following is a 39-amino-acid chain: Neuropeptide F (39 aa).

F39 is modified (phenylalanine amide).

This sequence belongs to the NPY family. Neuronal somata and fibers.

The protein localises to the secreted. In terms of biological role, may have an important physiological role in neuroregulation. This chain is Neuropeptide F, found in Cornu aspersum (Brown garden snail).